The following is a 210-amino-acid chain: Proteasome subunit beta (210 aa).

A propeptide spans 1 to 7 (MEVLKTG) (removed in mature form; by autocatalysis). The active-site Nucleophile is Thr8.

It belongs to the peptidase T1B family. As to quaternary structure, the 20S proteasome core is composed of 14 alpha and 14 beta subunits that assemble into four stacked heptameric rings, resulting in a barrel-shaped structure. The two inner rings, each composed of seven catalytic beta subunits, are sandwiched by two outer rings, each composed of seven alpha subunits. The catalytic chamber with the active sites is on the inside of the barrel. Has a gated structure, the ends of the cylinder being occluded by the N-termini of the alpha-subunits. Is capped at one or both ends by the proteasome regulatory ATPase, PAN.

The protein localises to the cytoplasm. The enzyme catalyses Cleavage of peptide bonds with very broad specificity.. The formation of the proteasomal ATPase PAN-20S proteasome complex, via the docking of the C-termini of PAN into the intersubunit pockets in the alpha-rings, triggers opening of the gate for substrate entry. Interconversion between the open-gate and close-gate conformations leads to a dynamic regulation of the 20S proteasome proteolysis activity. Component of the proteasome core, a large protease complex with broad specificity involved in protein degradation. The protein is Proteasome subunit beta of Picrophilus torridus (strain ATCC 700027 / DSM 9790 / JCM 10055 / NBRC 100828 / KAW 2/3).